The primary structure comprises 304 residues: Dihydroorotate dehydrogenase B (NAD(+)), catalytic subunit (304 aa).

FMN-binding positions include S21 and 45–46 (KA). Substrate is bound by residues K45 and 69 to 73 (NAIGL). 2 residues coordinate FMN: N99 and N127. N127 serves as a coordination point for substrate. C130 acts as the Nucleophile in catalysis. FMN contacts are provided by K165 and I191. 192 to 193 (NT) provides a ligand contact to substrate. Residues G217, 243-244 (GG), and 265-266 (GT) each bind FMN.

This sequence belongs to the dihydroorotate dehydrogenase family. Type 1 subfamily. As to quaternary structure, heterotetramer of 2 PyrK and 2 PyrD type B subunits. FMN serves as cofactor.

The protein resides in the cytoplasm. The enzyme catalyses (S)-dihydroorotate + NAD(+) = orotate + NADH + H(+). The protein operates within pyrimidine metabolism; UMP biosynthesis via de novo pathway; orotate from (S)-dihydroorotate (NAD(+) route): step 1/1. Its function is as follows. Catalyzes the conversion of dihydroorotate to orotate with NAD(+) as electron acceptor. This Listeria monocytogenes serotype 4b (strain F2365) protein is Dihydroorotate dehydrogenase B (NAD(+)), catalytic subunit (pyrD).